Consider the following 388-residue polypeptide: Succinate--CoA ligase [ADP-forming] subunit beta (388 aa).

The ATP-grasp domain maps to 9 to 244 (KQIFAKYKLP…PSQDDPREAL (236 aa)). Residues K46, 53–55 (GRG), E99, A102, and E107 contribute to the ATP site. Positions 199 and 213 each coordinate Mg(2+). Substrate-binding positions include N264 and 321 to 323 (GIV).

It belongs to the succinate/malate CoA ligase beta subunit family. Heterotetramer of two alpha and two beta subunits. Mg(2+) serves as cofactor.

It carries out the reaction succinate + ATP + CoA = succinyl-CoA + ADP + phosphate. The enzyme catalyses GTP + succinate + CoA = succinyl-CoA + GDP + phosphate. It functions in the pathway carbohydrate metabolism; tricarboxylic acid cycle; succinate from succinyl-CoA (ligase route): step 1/1. Functionally, succinyl-CoA synthetase functions in the citric acid cycle (TCA), coupling the hydrolysis of succinyl-CoA to the synthesis of either ATP or GTP and thus represents the only step of substrate-level phosphorylation in the TCA. The beta subunit provides nucleotide specificity of the enzyme and binds the substrate succinate, while the binding sites for coenzyme A and phosphate are found in the alpha subunit. This Glaesserella parasuis serovar 5 (strain SH0165) (Haemophilus parasuis) protein is Succinate--CoA ligase [ADP-forming] subunit beta.